Here is a 194-residue protein sequence, read N- to C-terminus: ATP-dependent Clp protease proteolytic subunit (194 aa).

Ser-97 serves as the catalytic Nucleophile. The active site involves His-122.

Belongs to the peptidase S14 family. In terms of assembly, fourteen ClpP subunits assemble into 2 heptameric rings which stack back to back to give a disk-like structure with a central cavity, resembling the structure of eukaryotic proteasomes.

Its subcellular location is the cytoplasm. It carries out the reaction Hydrolysis of proteins to small peptides in the presence of ATP and magnesium. alpha-casein is the usual test substrate. In the absence of ATP, only oligopeptides shorter than five residues are hydrolyzed (such as succinyl-Leu-Tyr-|-NHMec, and Leu-Tyr-Leu-|-Tyr-Trp, in which cleavage of the -Tyr-|-Leu- and -Tyr-|-Trp bonds also occurs).. In terms of biological role, cleaves peptides in various proteins in a process that requires ATP hydrolysis. Has a chymotrypsin-like activity. Plays a major role in the degradation of misfolded proteins. This Campylobacter jejuni subsp. jejuni serotype O:6 (strain 81116 / NCTC 11828) protein is ATP-dependent Clp protease proteolytic subunit.